Here is a 339-residue protein sequence, read N- to C-terminus: 3-isopropylmalate dehydrogenase (339 aa).

Residues Arg-87, Arg-97, Arg-124, and Asp-214 each contribute to the substrate site. Positions 214, 238, and 242 each coordinate Mg(2+). 274–286 (GSAPDIAGQGIAD) is a binding site for NAD(+).

Belongs to the isocitrate and isopropylmalate dehydrogenases family. LeuB type 2 subfamily. In terms of assembly, homodimer. The cofactor is Mg(2+). It depends on Mn(2+) as a cofactor.

The protein localises to the cytoplasm. The catalysed reaction is (2R,3S)-3-isopropylmalate + NAD(+) = 4-methyl-2-oxopentanoate + CO2 + NADH. Its pathway is amino-acid biosynthesis; L-leucine biosynthesis; L-leucine from 3-methyl-2-oxobutanoate: step 3/4. Functionally, catalyzes the oxidation of 3-carboxy-2-hydroxy-4-methylpentanoate (3-isopropylmalate) to 3-carboxy-4-methyl-2-oxopentanoate. The product decarboxylates to 4-methyl-2 oxopentanoate. The protein is 3-isopropylmalate dehydrogenase of Mycobacterium ulcerans (strain Agy99).